Here is a 243-residue protein sequence, read N- to C-terminus: Terpene cyclase nodB (243 aa).

A run of 3 helical transmembrane segments spans residues 19-39 (ISDI…AGMI), 50-70 (MAPL…LIYP), and 75-95 (IEQG…YTAI). N111 carries N-linked (GlcNAc...) asparagine glycosylation. The next 4 membrane-spanning stretches (helical) occupy residues 112-132 (ITLI…ALAA), 134-154 (IGPA…LSVG), 169-189 (SYTL…FAIL), and 205-225 (LVLW…ICLW).

The protein belongs to the paxB family.

It is found in the membrane. The protein operates within secondary metabolite biosynthesis. Functionally, terpene cyclase; part of the gene cluster that mediates the biosynthesis of the indole diterpenes nodulisporic acids (NA). Nodulisporic acid A (NAA) and its chemically modified derivatives are of particular significance because of their highly potent insecticidal activity against blood-feeding arthropods and lack of observable adverse effects on mammals, in particular the tremogenicity associated with the paspaline-derived IDTs is not observed. The geranylgeranyl diphosphate (GGPP) synthase ggs1, localized outside of the cluster, is proposed to catalyze the first step in nodulisporic acid biosynthesis via conversion of farnesyl pyrophosphate and isopentyl pyrophosphate into geranylgeranyl pyrophosphate (GGPP). Condensation of indole-3-glycerol phosphate with GGPP by the prenyl transferase nodC then forms 3-geranylgeranylindole (3-GGI). Epoxidation by the FAD-dependent monooxygenase nodM leads to a single-epoxidized-GGI that is substrate of the terpene cyclase nodB for cyclization to yield emindole SB. The terminal methyl carbon, C28, of emindole SB is then oxidized by the cytochrome P450 monooxygenase nodW to produce nodulisporic acid F (NAF), the pentacyclic core of NAA. NAF is converted to nodulisporic acid E (NAE) via prenylation. This step is probably performed by one of the indole diterpene prenyltransferases nodD1 or nodD2. Several oxidation steps performed by the FAD-linked oxidoreductase nodO and one of the cytochrome P450 monooxygenase nodR, nodX or nodZ further convert NAE to nodulisporic acid D (NAD). NAD is substrate of cytochrome P450 monooxygenase nodJ to produce the precursor of nodulisporic acid C (NAC), converted to NAC by one of the indole diterpene prenyltransferases nodD1 or nodD2. The FAD-dependent monooxygenase nodY2 then oxidizes NAC to nodulisporic acid B (NAB). Finally NAB is converted to NAA by one of the cytochrome P450 monooxygenases nodR, nodX or nodZ. The protein is Terpene cyclase nodB of Hypoxylon pulicicidum.